Here is a 1521-residue protein sequence, read N- to C-terminus: Suppressor of Ty 6 homolog (1521 aa).

The disordered stretch occupies residues Met1–Val204. Over residues Lys26 to Val41 the composition is skewed to basic residues. A Nuclear localization signal motif is present at residues Lys26–Val42. Composition is skewed to acidic residues over residues Ser45–Glu56 and Ala67–Ala76. Positions Arg77–Ile89 are enriched in basic and acidic residues. Residues Asn90–Glu103 show a composition bias toward acidic residues. The span at Pro127–Lys149 shows a compositional bias: basic and acidic residues. Positions Arg167–Gly177 are enriched in acidic residues. An S1 motif domain is found at Leu1182–Lys1251. An SH2 domain is found at His1299–Gln1388. Positions Gly1490–Arg1521 are disordered. Over residues Gly1504–Gln1513 the composition is skewed to pro residues.

Belongs to the SPT6 family. As to quaternary structure, interacts with glp-1 and lin-12.

Its subcellular location is the nucleus. Functionally, histone H3-H4 chaperone that plays a role in maintenance of chromatin structure during RNA polymerase II transcription elongation. May be required for several aspects of morphogenesis of C.briggsae, including regulation of division in the germline and gut and specification of ventral-uterine precursor cell fate. This Caenorhabditis briggsae protein is Suppressor of Ty 6 homolog (emb-5).